Here is a 418-residue protein sequence, read N- to C-terminus: Trans-acting enoyl reductase (418 aa).

The protein belongs to the saccharopine dehydrogenase family. Enoyl reductase subfamily.

Its function is as follows. Involved in the reduction of the double bond between C-4 and C-5 during phthiocerol dimycocerosates (DIM A) and glycosylated phenolphthiocerol dimycocerosates (PGL) biosynthesis. The chain is Trans-acting enoyl reductase from Mycobacterium leprae (strain TN).